The following is a 211-amino-acid chain: 7-carboxy-7-deazaguanine synthase (211 aa).

Substrate contacts are provided by residues 22 to 24 (LQG) and arginine 37. The 184-residue stretch at 28–211 (NTGMPSVFVR…LQTHKLIGIE (184 aa)) folds into the Radical SAM core domain. Residues cysteine 41, cysteine 45, and cysteine 48 each coordinate [4Fe-4S] cluster. Threonine 50 serves as a coordination point for Mg(2+). Threonine 78 provides a ligand contact to substrate. Residues glycine 80 and 122–124 (SPK) contribute to the S-adenosyl-L-methionine site.

Belongs to the radical SAM superfamily. 7-carboxy-7-deazaguanine synthase family. As to quaternary structure, homodimer. [4Fe-4S] cluster serves as cofactor. The cofactor is S-adenosyl-L-methionine. Mg(2+) is required as a cofactor.

The catalysed reaction is 6-carboxy-5,6,7,8-tetrahydropterin + H(+) = 7-carboxy-7-deazaguanine + NH4(+). It participates in purine metabolism; 7-cyano-7-deazaguanine biosynthesis. Functionally, catalyzes the complex heterocyclic radical-mediated conversion of 6-carboxy-5,6,7,8-tetrahydropterin (CPH4) to 7-carboxy-7-deazaguanine (CDG), a step common to the biosynthetic pathways of all 7-deazapurine-containing compounds. In Haemophilus influenzae (strain ATCC 51907 / DSM 11121 / KW20 / Rd), this protein is 7-carboxy-7-deazaguanine synthase.